A 617-amino-acid chain; its full sequence is Guanylate cyclase soluble subunit beta-2 (617 aa).

Histidine 26 serves as a coordination point for heme. In terms of domain architecture, Guanylate cyclase spans 391–519 (TILFSDVVTF…DTVNTASRME (129 aa)). Residues 577 to 586 (RSKTPVDHKG) are compositionally biased toward basic and acidic residues. The segment at 577–605 (RSKTPVDHKGSTQKASLPTTKLQGSVQPS) is disordered. Residues 588–604 (TQKASLPTTKLQGSVQP) are compositionally biased toward polar residues.

It belongs to the adenylyl cyclase class-4/guanylyl cyclase family. As to quaternary structure, heterodimer of an alpha and a beta chain. Heme is required as a cofactor. In terms of tissue distribution, expressed in gastric signet ring cell carcinoma, but not in the normal stomach.

The protein resides in the cytoplasm. The enzyme catalyses GTP = 3',5'-cyclic GMP + diphosphate. Activated by nitric oxide in the presence of magnesium or manganese ions. This chain is Guanylate cyclase soluble subunit beta-2 (GUCY1B2), found in Homo sapiens (Human).